Consider the following 409-residue polypeptide: Bone morphogenetic protein 4 (409 aa).

Positions 1–19 are cleaved as a signal peptide; sequence MIPGNRMLMVVLLCQVLLG. A propeptide spanning residues 20–293 is cleaved from the precursor; the sequence is GASHASLIPE…ALTRRRRAKR (274 aa). A Phosphoserine modification is found at S91. N-linked (GlcNAc...) asparagine glycans are attached at residues N144 and N209. Positions 284-308 are disordered; sequence ALTRRRRAKRSPKHHPQRARKKNKN. Cystine bridges form between C309-C374, C338-C406, and C342-C408. Residues N351 and N366 are each glycosylated (N-linked (GlcNAc...) asparagine).

Belongs to the TGF-beta family. As to quaternary structure, homodimer; disulfide-linked. Interacts with GREM2. Part of a complex consisting of TWSG1 and CHRD. Interacts with the serine proteases, HTRA1 and HTRA3; the interaction with either inhibits BMP4-mediated signaling. The HTRA protease activity is required for this inhibition. Interacts with SOSTDC1. Interacts with FBN1 (via N-terminal domain) and FBN2. Interacts with type I receptor BMPR1A. Interacts with type II receptor BMPR2. Interacts with FSTL1; this interaction inhibits the activation of the BMP4/Smad1/5/8 signaling pathway. Interacts with TGFBR3.

Its subcellular location is the secreted. The protein resides in the extracellular space. It is found in the extracellular matrix. Its function is as follows. Growth factor of the TGF-beta superfamily that plays essential roles in many developmental processes, including neurogenesis, vascular development, angiogenesis and osteogenesis. Acts in concert with PTHLH/PTHRP to stimulate ductal outgrowth during embryonic mammary development and to inhibit hair follicle induction. Initiates the canonical BMP signaling cascade by associating with type I receptor BMPR1A and type II receptor BMPR2. Once all three components are bound together in a complex at the cell surface, BMPR2 phosphorylates and activates BMPR1A. In turn, BMPR1A propagates signal by phosphorylating SMAD1/5/8 that travel to the nucleus and act as activators and repressors of transcription of target genes. Positively regulates the expression of odontogenic development regulator MSX1 via inducing the IPO7-mediated import of SMAD1 to the nucleus. Required for MSX1-mediated mesenchymal molar tooth bud development beyond the bud stage, via promoting Wnt signaling. Acts as a positive regulator of odontoblast differentiation during mesenchymal tooth germ formation, expression is repressed during the bell stage by MSX1-mediated inhibition of CTNNB1 signaling. Able to induce its own expression in dental mesenchymal cells and also in the neighboring dental epithelial cells via an MSX1-mediated pathway. Can also signal through non-canonical BMP pathways such as ERK/MAP kinase, PI3K/Akt, or SRC cascades. For example, induces SRC phosphorylation which, in turn, activates VEGFR2, leading to an angiogenic response. The protein is Bone morphogenetic protein 4 of Suncus murinus (Asian house shrew).